Consider the following 435-residue polypeptide: GTPase Der (435 aa).

2 EngA-type G domains span residues 8–169 and 176–351; these read NLVA…NFEN and FKIA…NNLS. GTP-binding positions include 14–21, 61–65, 123–126, 182–189, 229–233, and 294–297; these read GKPNVGKS, DTGGI, NKLD, GKPNAGKS, DTAGI, and NKWD. The KH-like domain occupies 352-435; that stretch reads REIKQNLLND…PINLVLKKNK (84 aa).

The protein belongs to the TRAFAC class TrmE-Era-EngA-EngB-Septin-like GTPase superfamily. EngA (Der) GTPase family. In terms of assembly, associates with the 50S ribosomal subunit.

Functionally, GTPase that plays an essential role in the late steps of ribosome biogenesis. In Mycoplasmopsis pulmonis (strain UAB CTIP) (Mycoplasma pulmonis), this protein is GTPase Der.